The primary structure comprises 290 residues: Small ribosomal subunit protein uS2 (290 aa).

It belongs to the universal ribosomal protein uS2 family. As to quaternary structure, component of the small ribosomal subunit. Mature ribosomes consist of a small (40S) and a large (60S) subunit. The 40S subunit contains about 33 different proteins and 1 molecule of RNA (18S). The 60S subunit contains about 49 different proteins and 3 molecules of RNA (28S, 5.8S and 5S). Interacts with ribosomal protein S21.

The protein resides in the cytoplasm. Its function is as follows. Required for the assembly and/or stability of the 40S ribosomal subunit. Required for the processing of the 20S rRNA-precursor to mature 18S rRNA in a late step of the maturation of 40S ribosomal subunits. The sequence is that of Small ribosomal subunit protein uS2 from Culex quinquefasciatus (Southern house mosquito).